The chain runs to 118 residues: UPF0102 protein STH1475 (118 aa).

It belongs to the UPF0102 family.

The polypeptide is UPF0102 protein STH1475 (Symbiobacterium thermophilum (strain DSM 24528 / JCM 14929 / IAM 14863 / T)).